The sequence spans 180 residues: NADH-quinone oxidoreductase subunit I (180 aa).

2 4Fe-4S ferredoxin-type domains span residues 48 to 80 (IVLT…LQKS) and 90 to 119 (EFFR…LTPD). [4Fe-4S] cluster is bound by residues C60, C63, C66, C70, C99, C102, C105, and C109. Positions 161 to 174 (KPKGDAENEAKPID) are enriched in basic and acidic residues. The segment at 161 to 180 (KPKGDAENEAKPIDVKSLLP) is disordered.

The protein belongs to the complex I 23 kDa subunit family. NDH-1 is composed of 14 different subunits. Subunits NuoA, H, J, K, L, M, N constitute the membrane sector of the complex. The cofactor is [4Fe-4S] cluster.

The protein resides in the cell inner membrane. The enzyme catalyses a quinone + NADH + 5 H(+)(in) = a quinol + NAD(+) + 4 H(+)(out). In terms of biological role, NDH-1 shuttles electrons from NADH, via FMN and iron-sulfur (Fe-S) centers, to quinones in the respiratory chain. The immediate electron acceptor for the enzyme in this species is believed to be ubiquinone. Couples the redox reaction to proton translocation (for every two electrons transferred, four hydrogen ions are translocated across the cytoplasmic membrane), and thus conserves the redox energy in a proton gradient. The polypeptide is NADH-quinone oxidoreductase subunit I (Aeromonas hydrophila subsp. hydrophila (strain ATCC 7966 / DSM 30187 / BCRC 13018 / CCUG 14551 / JCM 1027 / KCTC 2358 / NCIMB 9240 / NCTC 8049)).